The following is a 531-amino-acid chain: Glucose-6-phosphate exchanger SLC37A1 (531 aa).

Residues glutamine 18–serine 38 form a helical membrane-spanning segment. Residues cysteine 53 to histidine 72 form a disordered region. Helical transmembrane passes span glycine 100–isoleucine 120, tyrosine 129–phenylalanine 149, phenylalanine 157–valine 177, isoleucine 192–tryptophan 214, serine 222–isoleucine 242, leucine 332–isoleucine 352, glycine 364–isoleucine 384, alanine 392–valine 412, alanine 419–threonine 439, alanine 464–isoleucine 484, and glycine 488–valine 508.

Belongs to the major facilitator superfamily. Organophosphate:Pi antiporter (OPA) (TC 2.A.1.4) family.

It is found in the endoplasmic reticulum membrane. It catalyses the reaction D-glucose 6-phosphate(in) + phosphate(out) = D-glucose 6-phosphate(out) + phosphate(in). With respect to regulation, inhibited by vanadate but not by chlorogenic acid. Functionally, inorganic phosphate and glucose-6-phosphate antiporter. May transport cytoplasmic glucose-6-phosphate into the lumen of the endoplasmic reticulum and translocate inorganic phosphate into the opposite direction. Independent of a lumenal glucose-6-phosphatase. May not play a role in homeostatic regulation of blood glucose levels. The polypeptide is Glucose-6-phosphate exchanger SLC37A1 (Mus musculus (Mouse)).